The sequence spans 670 residues: Probable ATP-citrate synthase subunit 1 (670 aa).

The interval 1–22 (MPSATTASTNGANGASASPAPG) is disordered. Residues 257–277 (LLRY…EVGG) and 308–334 (FKTE…KNKS) contribute to the ATP site. Glu-274 lines the Mg(2+) pocket. The active-site Tele-phosphohistidine intermediate is His-316. Residue 335–345 (MREAGFYVPDT) participates in CoA binding.

The protein belongs to the succinate/malate CoA ligase alpha subunit family. In terms of assembly, composed of two subunits.

It is found in the cytoplasm. The catalysed reaction is oxaloacetate + acetyl-CoA + ADP + phosphate = citrate + ATP + CoA. Catalyzes the formation of cytosolic acetyl-CoA, which is mainly used for the biosynthesis of fatty acids and sterols. This is Probable ATP-citrate synthase subunit 1 from Neurospora crassa (strain ATCC 24698 / 74-OR23-1A / CBS 708.71 / DSM 1257 / FGSC 987).